The primary structure comprises 358 residues: MNELDSLVATARAAFAEAKTPAELENAKAQFLGKSGRITELMKGMAALSVDEKKSRGAAINVAKQAIEAALTERRQQLADEELSLQLRAEALDVSLPGRRRIPGGLHPVSRTLERIEEIFSSMGFDVADGPEIESDWHSFTSLNNPPNHPARSMQDTFYVDLNGDDGIPYNLRPHTSPMQVRYAHQHIKKYAAEFAAAAADATGTVKAPEIRVIAPGRTYRVDSDATHSPMFHQCEGLWLGENVSFKDLKVVFTDFCRTFFESDDLVLRFRPSFFPFTEPSAEIDIQFASGPLAGRWLEVAGSGQVHPNVVRNMGLDPERYIGFAFGMGPDRLTMLRYGVNDLRLFFDGDLRFLSQFQ.

Mg(2+) is bound at residue E279.

The protein belongs to the class-II aminoacyl-tRNA synthetase family. Phe-tRNA synthetase alpha subunit type 1 subfamily. In terms of assembly, tetramer of two alpha and two beta subunits. Mg(2+) serves as cofactor.

The protein resides in the cytoplasm. The catalysed reaction is tRNA(Phe) + L-phenylalanine + ATP = L-phenylalanyl-tRNA(Phe) + AMP + diphosphate + H(+). The protein is Phenylalanine--tRNA ligase alpha subunit of Variovorax paradoxus (strain S110).